A 284-amino-acid polypeptide reads, in one-letter code: RAD52 motif-containing protein 1 (284 aa).

A necessary for nuclear localization and for nucleolar accumulation in response to heat shock region spans residues 1-92 (MAELVPFAVP…KQLFQKSPVK (92 aa)). The RRM domain maps to 15–98 (KTLLVWELSS…SPVKVRLGTR (84 aa)). Residues 90 to 133 (PVKVRLGTRHKAVQHQALALNSSKCQELANYYFGFNGCSKRIIK) are necessary for nuclear and nucleolar localization.

Homodimer. As to expression, expressed in testis.

The protein localises to the nucleus. The protein resides in the cytoplasm. It localises to the nucleolus. It is found in the PML body. Its subcellular location is the cajal body. Its function is as follows. May confer resistance to the antitumor agent cisplatin. Binds to DNA and RNA. In Homo sapiens (Human), this protein is RAD52 motif-containing protein 1 (RDM1).